We begin with the raw amino-acid sequence, 473 residues long: Arginine biosynthesis bifunctional protein ArgJ, mitochondrial (473 aa).

Substrate-binding residues include Thr201, Lys230, Thr241, Glu328, Asn468, and Thr473. Catalysis depends on Thr241, which acts as the Nucleophile.

It belongs to the ArgJ family. In terms of assembly, heterodimer of an alpha and a beta chain. The alpha and beta chains are autoproteolytically processed from a single precursor protein within the mitochondrion.

It is found in the mitochondrion matrix. It catalyses the reaction N(2)-acetyl-L-ornithine + L-glutamate = N-acetyl-L-glutamate + L-ornithine. The enzyme catalyses L-glutamate + acetyl-CoA = N-acetyl-L-glutamate + CoA + H(+). Its pathway is amino-acid biosynthesis; L-arginine biosynthesis; L-ornithine and N-acetyl-L-glutamate from L-glutamate and N(2)-acetyl-L-ornithine (cyclic): step 1/1. The protein operates within amino-acid biosynthesis; L-arginine biosynthesis; N(2)-acetyl-L-ornithine from L-glutamate: step 1/4. In terms of biological role, catalyzes two activities which are involved in the cyclic version of arginine biosynthesis: the synthesis of acetylglutamate from glutamate and acetyl-CoA, and of ornithine by transacetylation between acetylornithine and glutamate. This is Arginine biosynthesis bifunctional protein ArgJ, mitochondrial from Paracoccidioides brasiliensis (strain Pb18).